Consider the following 394-residue polypeptide: Tubby-like F-box protein 2 (394 aa).

Residues 21–44 (SKRSWSKSSHIAPDQTTPPLDNIP) are disordered. A compositionally biased stretch (polar residues) spans 26 to 44 (SKSSHIAPDQTTPPLDNIP). The 56-residue stretch at 46–101 (SPWASLPPELLHDIIWRVEESETAWPARAAVVSCASVCKSWRGITMEIVRIPEQCG) folds into the F-box domain. Disordered regions lie at residues 200–225 (ASST…PTNS) and 268–297 (IEEE…PSLR).

It belongs to the TUB family. Ubiquitous.

The chain is Tubby-like F-box protein 2 from Arabidopsis thaliana (Mouse-ear cress).